We begin with the raw amino-acid sequence, 476 residues long: Methylenetetrahydrofolate--tRNA-(uracil-5-)-methyltransferase TrmFO (476 aa).

14 to 19 (GGGLAG) lines the FAD pocket.

Belongs to the MnmG family. TrmFO subfamily. FAD is required as a cofactor.

It is found in the cytoplasm. The enzyme catalyses uridine(54) in tRNA + (6R)-5,10-methylene-5,6,7,8-tetrahydrofolate + NADH + H(+) = 5-methyluridine(54) in tRNA + (6S)-5,6,7,8-tetrahydrofolate + NAD(+). It carries out the reaction uridine(54) in tRNA + (6R)-5,10-methylene-5,6,7,8-tetrahydrofolate + NADPH + H(+) = 5-methyluridine(54) in tRNA + (6S)-5,6,7,8-tetrahydrofolate + NADP(+). In terms of biological role, catalyzes the folate-dependent formation of 5-methyl-uridine at position 54 (M-5-U54) in all tRNAs. This chain is Methylenetetrahydrofolate--tRNA-(uracil-5-)-methyltransferase TrmFO, found in Brucella anthropi (strain ATCC 49188 / DSM 6882 / CCUG 24695 / JCM 21032 / LMG 3331 / NBRC 15819 / NCTC 12168 / Alc 37) (Ochrobactrum anthropi).